The chain runs to 635 residues: MSRIIGIDLGTTNSCVAIMDGGNVKIIENSEGDRTTPSIIAYPKDSEEVLVGQPAKRQAVTNPENTLYAIKRLIGRRFDEDAVQKDINLVPYKIVKVDNGDAWVEVKGKKMAAPEISAKVIGKMKKTAEDYLGEEVTEAVITVPAYFNDSQRQATKDAGKIAGLNVKRIINEPTAAALAYGVDKVKGNKTIAVYDLGGGTFDVSIIEMEDIDGEKHFEVLSTNGDTFLGGEDFDQRIIGYLVDEFKRDQGVDLTNDPMALQRLKEAAEKAKIELSSSEQTDVNLPYVTADASGPKHLNIKITRAKLELLVEDLLKRTIEPCKTALKDADLSASDIDEVILVGGQTRMPKVTKMVQDFFGKEPKKDVNPDEAVAMGAAIQAGVLGGDVKDVLLLDVTPLSLGIETMGGIMTKLIEKNTTIPTNASQIFSTAVDNQSAVTVHVLQGERNMSSANKSLGQFNLEGIPNAPKGQPQVEVTFDIDSDGILDVSAKDKNTGKEQSITIKASSGLSDEEVEKMIKDAEAHADEDKKFQELVASKNMADSLIHSTKKTLEELKNEVSDDEKSVIEMAITELEKAIKNDDKKAIDAKIQTLSKKAQPLTEKVQAKSSAENTSKEKSKADDDVVDADFEEVKDDK.

Thr200 is modified (phosphothreonine; by autocatalysis). Residues 595–635 (KAQPLTEKVQAKSSAENTSKEKSKADDDVVDADFEEVKDDK) are disordered. Over residues 612 to 621 (TSKEKSKADD) the composition is skewed to basic and acidic residues. A compositionally biased stretch (acidic residues) spans 622–635 (DVVDADFEEVKDDK).

Belongs to the heat shock protein 70 family.

Its function is as follows. Acts as a chaperone. The protein is Chaperone protein DnaK of Ruthia magnifica subsp. Calyptogena magnifica.